The following is a 610-amino-acid chain: MEESETVLKLRRQLKEAEEERVKAAHYGLELLESQSDLQNQLEEQRNEMTGTIENLEQEKYSLQREVELKNRMLESLTSECENIRQQQKLSLEQLEEQLERNHHRELSEIKDKLEKLKAELDEARLSEKQLKHKLDYQTEVLANKSEELRMMSERVHETMSSEMLTLQLEKTELETAKDNLEQELNELQYREQQLLLTNGNQSRQLERLQTEKEEREKEAVGYFSALEKAREANQDLQAQLDIALQQAQDPNSKGNSLFAEVEDRRSEMERQLISMKVQFQSLQKQHAFSRQQMHRMKIQIATLLQLKGSHSDPEQLERLQAMVAQKNSEIETLVMKVRQLEKSQQICENGPVASSCDGLGQGDETYYVDLLKMKLVNSSKEIDKVKDELSLQRMKALAESQRVLELERKLFTNDRHLKLSQGENMKLRVNLDEMKMKYEPDEMGKIRTQKRRKEQLPLDCLIDNTSVAVTSGTEAHGVSDATPGETCTAESSDDKKLPKEDLSLSTKDQDPSSVLLKPNEPPNGQPPKERKRVRIMEDEKDTPDLNKRNPNNCTITSIHPRSTYEESTSELKKVDEEQEKRKQERKSRLRAPPVLHVPSKPATAQCPQQ.

A coiled-coil region spans residues 1–392 (MEESETVLKL…IDKVKDELSL (392 aa)). The tract at residues 474–610 (TEAHGVSDAT…KPATAQCPQQ (137 aa)) is disordered. Basic and acidic residues-rich tracts occupy residues 493-511 (SDDK…KDQD) and 535-548 (RIME…DLNK). Residues 549–561 (RNPNNCTITSIHP) show a composition bias toward polar residues. Basic and acidic residues predominate over residues 570 to 583 (SELKKVDEEQEKRK).

The protein belongs to the Spindly family.

Its subcellular location is the chromosome. It is found in the centromere. It localises to the kinetochore. Its function is as follows. Required for the localization of dynein and dynactin to the mitotic kintochore. Dynein is believed to control the initial lateral interaction between the kinetochore and spindle microtubules and to facilitate the subsequent formation of end-on kinetochore-microtubule attachments mediated by the NDC80 complex. In Xenopus laevis (African clawed frog), this protein is Protein Spindly-B (spdl1-b).